The chain runs to 263 residues: Killer cell lectin-like receptor 4 (263 aa).

Over 1–44 (MTEQEDTFSAVRFHKSSGLQNEMRLKETRKPEKARLRVCSVPWQ) the chain is Cytoplasmic. The chain crosses the membrane as a helical; Signal-anchor for type II membrane protein span at residues 45–65 (LIVIALGILISLRLVTVAVLM). At 66 to 263 (TNIFQYGQQK…CGKRLDKFPH (198 aa)) the chain is on the extracellular side. 2 N-linked (GlcNAc...) asparagine glycosylation sites follow: Asn87 and Asn104. The 120-residue stretch at 139-258 (GVKVYWFCYG…SFICICGKRL (120 aa)) folds into the C-type lectin domain. 4 disulfide bridges follow: Cys146–Cys151, Cys164–Cys252, Cys168–Cys254, and Cys233–Cys246. N-linked (GlcNAc...) asparagine glycans are attached at residues Asn170 and Asn222.

Homodimer; disulfide-linked. Interacts with the adapter protein TYROBP/DAP12; the interaction leads to natural killer cell activation.

The protein localises to the cell membrane. Receptor on natural killer (NK) cells for class I MHC. The chain is Killer cell lectin-like receptor 4 (Klra4) from Mus musculus (Mouse).